We begin with the raw amino-acid sequence, 692 residues long: uncharacterized protein (692 aa).

Residues 1-39 constitute a chloroplast transit peptide; the sequence is MLRLPSSMPIVSFPANPNLLINPQPSWPSRRGNSAVVVS. The Protein kinase domain maps to 189–523; the sequence is EISPEPVAAA…RLESLLSESL (335 aa). Residues 195–203 and lysine 218 contribute to the ATP site; that span reads VAAASLGQV. Aspartate 343 acts as the Proton acceptor in catalysis.

It belongs to the protein kinase superfamily. ADCK protein kinase family.

It localises to the plastid. Its subcellular location is the chloroplast. The protein resides in the plastoglobule. This is an uncharacterized protein from Arabidopsis thaliana (Mouse-ear cress).